Reading from the N-terminus, the 174-residue chain is Co-chaperone protein HscB homolog (174 aa).

In terms of domain architecture, J spans 2–74 (NYFELFKFSP…IRRAEHMLSL (73 aa)).

This sequence belongs to the HscB family. In terms of assembly, interacts with HscA and stimulates its ATPase activity.

Functionally, co-chaperone involved in the maturation of iron-sulfur cluster-containing proteins. Seems to help targeting proteins to be folded toward HscA. This Shewanella sp. (strain MR-4) protein is Co-chaperone protein HscB homolog.